A 206-amino-acid polypeptide reads, in one-letter code: Ribosomal RNA large subunit methyltransferase E (206 aa).

G61, W63, D81, D97, and D122 together coordinate S-adenosyl-L-methionine. The active-site Proton acceptor is the K162.

It belongs to the class I-like SAM-binding methyltransferase superfamily. RNA methyltransferase RlmE family.

The protein localises to the cytoplasm. It catalyses the reaction uridine(2552) in 23S rRNA + S-adenosyl-L-methionine = 2'-O-methyluridine(2552) in 23S rRNA + S-adenosyl-L-homocysteine + H(+). Functionally, specifically methylates the uridine in position 2552 of 23S rRNA at the 2'-O position of the ribose in the fully assembled 50S ribosomal subunit. This is Ribosomal RNA large subunit methyltransferase E from Neisseria gonorrhoeae (strain ATCC 700825 / FA 1090).